The chain runs to 279 residues: S-methyl-5'-thioadenosine phosphorylase (279 aa).

Phosphate is bound by residues serine 13, 55–56 (RH), and 88–89 (TA). Position 191 (methionine 191) interacts with substrate. Threonine 192 is a binding site for phosphate. 215–217 (DYD) provides a ligand contact to substrate.

This sequence belongs to the PNP/MTAP phosphorylase family. MTAP subfamily. Homotrimer.

Its subcellular location is the cytoplasm. The protein resides in the nucleus. The enzyme catalyses S-methyl-5'-thioadenosine + phosphate = 5-(methylsulfanyl)-alpha-D-ribose 1-phosphate + adenine. It participates in amino-acid biosynthesis; L-methionine biosynthesis via salvage pathway; S-methyl-5-thio-alpha-D-ribose 1-phosphate from S-methyl-5'-thioadenosine (phosphorylase route): step 1/1. Functionally, catalyzes the reversible phosphorylation of S-methyl-5'-thioadenosine (MTA) to adenine and 5-methylthioribose-1-phosphate. Involved in the breakdown of MTA, a major by-product of polyamine biosynthesis. Responsible for the first step in the methionine salvage pathway after MTA has been generated from S-adenosylmethionine. Has broad substrate specificity with 6-aminopurine nucleosides as preferred substrates. This is S-methyl-5'-thioadenosine phosphorylase from Anopheles darlingi (Mosquito).